The chain runs to 289 residues: Protein charybde (289 aa).

Residues Thr-119 to Thr-142 form a disordered region.

Belongs to the DDIT4 family.

The protein resides in the cytoplasm. Inhibits cell growth by regulating the Tor pathway upstream of the Tsc1-Tsc2 complex and downstream of Akt1. Acts as a cell death activator during head development. The chain is Protein charybde (chrb) from Drosophila pseudoobscura pseudoobscura (Fruit fly).